The following is a 242-amino-acid chain: DNA repair protein RecO (242 aa).

This sequence belongs to the RecO family. In terms of assembly, monomer.

Involved in DNA repair and RecF pathway recombination. The sequence is that of DNA repair protein RecO from Salmonella enteritidis PT4 (strain P125109).